Reading from the N-terminus, the 170-residue chain is Large ribosomal subunit protein uL11 (170 aa).

It belongs to the universal ribosomal protein uL11 family. In terms of assembly, part of the ribosomal stalk of the 50S ribosomal subunit. Interacts with L10 and the large rRNA to form the base of the stalk. L10 forms an elongated spine to which L12 dimers bind in a sequential fashion forming a multimeric L10(L12)X complex.

In terms of biological role, forms part of the ribosomal stalk which helps the ribosome interact with GTP-bound translation factors. The protein is Large ribosomal subunit protein uL11 of Saccharolobus islandicus (strain Y.N.15.51 / Yellowstone #2) (Sulfolobus islandicus).